The sequence spans 184 residues: ATP synthase subunit b (184 aa).

The chain crosses the membrane as a helical span at residues 24-44; it reads ILVVVVGFALLMFIVIKFIVP.

The protein belongs to the ATPase B chain family. In terms of assembly, F-type ATPases have 2 components, F(1) - the catalytic core - and F(0) - the membrane proton channel. F(1) has five subunits: alpha(3), beta(3), gamma(1), delta(1), epsilon(1). F(0) has three main subunits: a(1), b(2) and c(10-14). The alpha and beta chains form an alternating ring which encloses part of the gamma chain. F(1) is attached to F(0) by a central stalk formed by the gamma and epsilon chains, while a peripheral stalk is formed by the delta and b chains.

Its subcellular location is the cell membrane. Its function is as follows. F(1)F(0) ATP synthase produces ATP from ADP in the presence of a proton or sodium gradient. F-type ATPases consist of two structural domains, F(1) containing the extramembraneous catalytic core and F(0) containing the membrane proton channel, linked together by a central stalk and a peripheral stalk. During catalysis, ATP synthesis in the catalytic domain of F(1) is coupled via a rotary mechanism of the central stalk subunits to proton translocation. Component of the F(0) channel, it forms part of the peripheral stalk, linking F(1) to F(0). The chain is ATP synthase subunit b (atpF) from Micrococcus luteus (strain ATCC 4698 / DSM 20030 / JCM 1464 / CCM 169 / CCUG 5858 / IAM 1056 / NBRC 3333 / NCIMB 9278 / NCTC 2665 / VKM Ac-2230) (Micrococcus lysodeikticus).